A 140-amino-acid polypeptide reads, in one-letter code: Small ribosomal subunit protein uS12m (140 aa).

The protein belongs to the universal ribosomal protein uS12 family.

Its subcellular location is the mitochondrion. This Dictyostelium discoideum (Social amoeba) protein is Small ribosomal subunit protein uS12m (mrps12).